Reading from the N-terminus, the 508-residue chain is Maturase K (508 aa).

It belongs to the intron maturase 2 family. MatK subfamily.

Its subcellular location is the plastid. It is found in the chloroplast. Functionally, usually encoded in the trnK tRNA gene intron. Probably assists in splicing its own and other chloroplast group II introns. This chain is Maturase K, found in Marathrum schiedeanum.